The following is a 138-amino-acid chain: Large ribosomal subunit protein uL16 (138 aa).

Positions 1 to 17 (MLIPRKVKHRKQHHPKQ) are enriched in basic residues. Residues 1–24 (MLIPRKVKHRKQHHPKQRGIASGG) are disordered.

It belongs to the universal ribosomal protein uL16 family. Part of the 50S ribosomal subunit.

Functionally, binds 23S rRNA and is also seen to make contacts with the A and possibly P site tRNAs. This chain is Large ribosomal subunit protein uL16, found in Mycolicibacterium vanbaalenii (strain DSM 7251 / JCM 13017 / BCRC 16820 / KCTC 9966 / NRRL B-24157 / PYR-1) (Mycobacterium vanbaalenii).